The following is a 447-amino-acid chain: Gamma-glutamyl phosphate reductase (447 aa).

Belongs to the gamma-glutamyl phosphate reductase family.

Its subcellular location is the cytoplasm. The enzyme catalyses L-glutamate 5-semialdehyde + phosphate + NADP(+) = L-glutamyl 5-phosphate + NADPH + H(+). It participates in amino-acid biosynthesis; L-proline biosynthesis; L-glutamate 5-semialdehyde from L-glutamate: step 2/2. Functionally, catalyzes the NADPH-dependent reduction of L-glutamate 5-phosphate into L-glutamate 5-semialdehyde and phosphate. The product spontaneously undergoes cyclization to form 1-pyrroline-5-carboxylate. This Methanosarcina barkeri (strain Fusaro / DSM 804) protein is Gamma-glutamyl phosphate reductase.